We begin with the raw amino-acid sequence, 266 residues long: Cell division protein FtsQ (266 aa).

Residues 1 to 31 (MRQKTSSNKKKQKNTNNISLRRKLGLMYKKA) are Cytoplasmic-facing. A helical membrane pass occupies residues 32 to 52 (ILGLKIVLMIFVCLFVFTKYF). The Periplasmic portion of the chain corresponds to 53-266 (TSIKTYLITN…DRNKYYIQKY (214 aa)). Positions 72 to 140 (FRLENVIIEG…NTVYIKLFER (69 aa)) constitute a POTRA domain.

This sequence belongs to the FtsQ/DivIB family. FtsQ subfamily.

The protein localises to the cell inner membrane. In terms of biological role, essential cell division protein. This Rickettsia typhi (strain ATCC VR-144 / Wilmington) protein is Cell division protein FtsQ.